The primary structure comprises 84 residues: Cell division topological specificity factor (84 aa).

This sequence belongs to the MinE family.

Prevents the cell division inhibition by proteins MinC and MinD at internal division sites while permitting inhibition at polar sites. This ensures cell division at the proper site by restricting the formation of a division septum at the midpoint of the long axis of the cell. The protein is Cell division topological specificity factor of Cupriavidus pinatubonensis (strain JMP 134 / LMG 1197) (Cupriavidus necator (strain JMP 134)).